The chain runs to 55 residues: Large ribosomal subunit protein bL33 (55 aa).

The protein belongs to the bacterial ribosomal protein bL33 family.

In Ruegeria sp. (strain TM1040) (Silicibacter sp.), this protein is Large ribosomal subunit protein bL33.